The sequence spans 72 residues: MAKDDVIEVDGKVIEALPNATFRVQLENGHIVLCHIAGKMRMHYIKILPGDMVKIELTPYSLDKGRITYRHK.

The S1-like domain maps to 1-72 (MAKDDVIEVD…DKGRITYRHK (72 aa)).

Belongs to the IF-1 family. In terms of assembly, component of the 30S ribosomal translation pre-initiation complex which assembles on the 30S ribosome in the order IF-2 and IF-3, IF-1 and N-formylmethionyl-tRNA(fMet); mRNA recruitment can occur at any time during PIC assembly.

The protein resides in the cytoplasm. Its function is as follows. One of the essential components for the initiation of protein synthesis. Stabilizes the binding of IF-2 and IF-3 on the 30S subunit to which N-formylmethionyl-tRNA(fMet) subsequently binds. Helps modulate mRNA selection, yielding the 30S pre-initiation complex (PIC). Upon addition of the 50S ribosomal subunit IF-1, IF-2 and IF-3 are released leaving the mature 70S translation initiation complex. This Helicobacter hepaticus (strain ATCC 51449 / 3B1) protein is Translation initiation factor IF-1.